A 289-amino-acid polypeptide reads, in one-letter code: Protease HtpX homolog (289 aa).

A run of 2 helical transmembrane segments spans residues 10–30 (TAAL…VIGS) and 34–54 (STTP…YGYW). Residue His138 participates in Zn(2+) binding. The active site involves Glu139. Position 142 (His142) interacts with Zn(2+). Helical transmembrane passes span 153–173 (VAAA…IFGG) and 182–202 (LAVM…QSAI). Glu207 is a binding site for Zn(2+).

The protein belongs to the peptidase M48B family. The cofactor is Zn(2+).

The protein resides in the cell membrane. The polypeptide is Protease HtpX homolog (Arthrobacter sp. (strain FB24)).